The chain runs to 433 residues: 3-phosphoshikimate 1-carboxyvinyltransferase (433 aa).

3-phosphoshikimate-binding residues include Lys22, Ser23, and Arg27. Residue Lys22 participates in phosphoenolpyruvate binding. Residues Gly95 and Arg123 each contribute to the phosphoenolpyruvate site. 3-phosphoshikimate-binding residues include Ser167, Gln169, Asp315, and Lys342. Phosphoenolpyruvate is bound at residue Gln169. The active-site Proton acceptor is Asp315. Residues Arg346 and Arg387 each contribute to the phosphoenolpyruvate site.

Belongs to the EPSP synthase family. In terms of assembly, monomer.

Its subcellular location is the cytoplasm. The catalysed reaction is 3-phosphoshikimate + phosphoenolpyruvate = 5-O-(1-carboxyvinyl)-3-phosphoshikimate + phosphate. The protein operates within metabolic intermediate biosynthesis; chorismate biosynthesis; chorismate from D-erythrose 4-phosphate and phosphoenolpyruvate: step 6/7. Catalyzes the transfer of the enolpyruvyl moiety of phosphoenolpyruvate (PEP) to the 5-hydroxyl of shikimate-3-phosphate (S3P) to produce enolpyruvyl shikimate-3-phosphate and inorganic phosphate. In Legionella pneumophila (strain Corby), this protein is 3-phosphoshikimate 1-carboxyvinyltransferase.